Consider the following 617-residue polypeptide: mRNA-decapping enzyme 1B (617 aa).

The residue at position 2 (Ala-2) is an N-acetylalanine. Ser-147 carries the post-translational modification Phosphoserine. Tyr-191 bears the Phosphotyrosine mark. Disordered stretches follow at residues 195-222 (NLIK…LDPE) and 243-266 (TVEP…KLPI). A compositionally biased stretch (polar residues) spans 205–219 (SENQQQRIPQPNQTL). Positions 252–261 (QQQQQQQQQQ) are enriched in low complexity. Phosphoserine is present on residues Ser-275 and Ser-336. The segment at 362 to 426 (TPGAANKCDP…VGHQAHGREQ (65 aa)) is disordered. Residues 371–381 (PSTPAPASSAA) show a composition bias toward low complexity. The residue at position 392 (Thr-392) is a Phosphothreonine. Ser-448 and Ser-511 each carry phosphoserine.

Belongs to the DCP1 family. Interacts with DCP1A. As to quaternary structure, (Microbial infection) Interacts with rotavirus A non-structural protein 2; this interaction probably plays a role in the sequestration of DCP1B in viral factories. Interacts with rotavirus A non-structural protein 5; this interaction probably plays a role in its sequestration in viral factories.

The protein localises to the cytoplasm. Its subcellular location is the nucleus. The catalysed reaction is a 5'-end (N(7)-methyl 5'-triphosphoguanosine)-ribonucleoside in mRNA + H2O = N(7)-methyl-GDP + a 5'-end phospho-ribonucleoside in mRNA + 2 H(+). Its function is as follows. May play a role in the degradation of mRNAs, both in normal mRNA turnover and in nonsense-mediated mRNA decay. May remove the 7-methyl guanine cap structure from mRNA molecules, yielding a 5'-phosphorylated mRNA fragment and 7m-GDP. This Homo sapiens (Human) protein is mRNA-decapping enzyme 1B (DCP1B).